The sequence spans 385 residues: Multicilin (385 aa).

Positions 1-130 (MQACGGGAAG…TVDDLISDSS (130 aa)) are necessary and sufficient for its degradation during the cell cycle. The tract at residues 86–111 (SSLLGSDAPPGGDLAASQNHSHQTEA) is disordered. A necessary and sufficient for proper nuclear localization region spans residues 131–385 (SMMSPTLASG…GGYKFRWVPS (255 aa)). Residues 173-245 (PDVPPPEQYW…SVLDKLMITQ (73 aa)) are necessary and sufficient for interaction with GMNN and sufficient for homodimerization. Residues 179-227 (EQYWKEVADQNQRALGDALVENNQLHVTLTQKQEEIASLKERNVQLKEL) adopt a coiled-coil conformation. The disordered stretch occupies residues 294-319 (ALQSRDPKRPRLLPEPANTDTRPGNL).

The protein belongs to the geminin family. Heterodimer (via coiled-coil domain) with GMNN (via coiled-coil domain); targets GMNN to the nucleus. Can form homodimers (in vitro, via coiled-coil domain), but these are much less stable than the heterodimer formed with GMNN.

The protein resides in the nucleus. Functionally, transcription regulator specifically required for multiciliate cell differentiation. Acts in a multiprotein complex containing E2F4 and E2F5 that binds and activates genes required for centriole biogenesis. Required for the deuterosome-mediated acentriolar pathway. Plays a role in mitotic cell cycle progression by promoting cell cycle exit. Modulates GMNN activity by reducing its affinity for CDT1. This Homo sapiens (Human) protein is Multicilin.